Consider the following 87-residue polypeptide: HssA/B-like protein 8 (87 aa).

A compositionally biased stretch (polar residues) spans 1 to 22 (MSILSALTSISNPMKSTKSSVA). The tract at residues 1–24 (MSILSALTSISNPMKSTKSSVANG) is disordered.

Belongs to the hssA/B family.

The sequence is that of HssA/B-like protein 8 (hssl8) from Dictyostelium discoideum (Social amoeba).